The primary structure comprises 870 residues: Radial spoke head 10 homolog B (870 aa).

Basic and acidic residues predominate over residues 1 to 16; sequence MVKEKKKADKKGEKSA. The segment at 1–43 is disordered; it reads MVKEKKKADKKGEKSARSPSSLSDNLDFSKQDGNTTRQEMSPA. Over residues 17-39 the composition is skewed to polar residues; the sequence is RSPSSLSDNLDFSKQDGNTTRQE. 10 MORN repeats span residues 86–108, 109–131, 132–154, 155–177, 179–201, 204–226, 227–249, 251–273, 284–306, and 307–329; these read YEGE…GGCT, YRGM…DGLK, YEGD…DGSM, YEGE…TQPV, YIGH…QEGT, YEGD…SGNI, YEGQ…TTNE, YTGR…LKRI, YIGE…SGAM, and YDGE…NGRV. A disordered region spans residues 674–704; it reads NKSPSAVMSHESDAAHSDSARSSSSKLELSP. Basic and acidic residues predominate over residues 683–692; that stretch reads HESDAAHSDS. Positions 693-703 are enriched in low complexity; the sequence is ARSSSSKLELS. Residues 784 to 811 adopt a coiled-coil conformation; that stretch reads KEKIRADRLRSTAQAQQRKMEDDELEAR. Positions 840-870 are disordered; sequence VSSSHLILDPPKEDVTVSPSSKTITSKKKKK.

In terms of assembly, interacts with RSPH6A. Does not appear to be part of the axonemal radial spoke complexes 1 or 2.

The protein resides in the cytoplasm. It is found in the cytoskeleton. It localises to the cilium axoneme. Its subcellular location is the cell projection. The protein localises to the cilium. The protein resides in the flagellum. Functionally, may function as part of the axonemal radial spoke complex 3 (RS3). Radial spoke complexes are important for ciliary motility. The polypeptide is Radial spoke head 10 homolog B (RSPH10B) (Homo sapiens (Human)).